The sequence spans 938 residues: MTSQSHGAPPVPSSRPPASRVPVSGYDSHDSHSVSSSHSSHSPVTTHHHPAPPPPASRPVRESGVAPVTAPEPIAAPEPIAAPEPIPAPEPIAAPVPEGLKSEHKPVEREHKPVERKPVSSPAEKSIPASSPVHKAAPTPAASHAVPTSQKSAKSTPGSYAGIPSLQLIDGNKEFNPDVSSYFKKVHLDRAGLDYHVVAVFGSQSTGKSTLLNALFGTQFDVMNETARQQTTKGIWMARAQLEAPHSANSAHSQDCSDSGVLVMDVEGTDGRERGEDQDFERKSALFALATSEVLIVNIWEHQIGLYQGANMGLLKTVFEVNLNLFATSQNRSLIMFVIRDHIGATPLANLSTTLKTDMGKLWDSINKPEGLEHAKLEDFFDLQFTALPHKLLQPNEFYADVEQLACRFTVPKDPNYVFKPVYHRNVPLDGWSFYAEQVWDQIEQNKDLDLPTQQILVARFRCDEIAAGALDIFLSLLVKIRDQLSGGAVASAVLGGLMGEARKQTVDEYDSQASRYTPSVYSATLEKLEDRVDNDLGKVYQSYLAQLKRESLEQFNAALESSSALTFGENLSRASKAAHAHFIDNAKQVTAAIGQPNSSHFSYDDTLAALEQELDTLRDHKSKVEIDRLISRSAKRFKSSFHEEFDENLNKPDETVWDRILESFETLLNASIKKIDPNYSPSAPSAFSFGFGSPKTSAEGLKQIQQEAWAVFGAELKELSKEEQVLSRLKNKFKESFRYDANGVPIVWRPGDDIDGAFAKSREQALEIMPLLSTAKLSSGKSIEPTVALEDDEDDDDETAFAVILTPKRQASLIEKFKKQAEGLYLEAKRSTIQSTTQIPLYMYGLLLLLGWNEIMAVLRSPVYFMFLLVAAGAAYVIHTLHLWGPLTHMTNTMIAEATDMAKAKLKQVLNEAPTGETREREAPVGSSRDDVELKDL.

Residues 1–159 (MTSQSHGAPP…QKSAKSTPGS (159 aa)) form a disordered region. Over 1–839 (MTSQSHGAPP…KRSTIQSTTQ (839 aa)) the chain is Cytoplasmic. Low complexity predominate over residues 33–45 (SVSSSHSSHSPVT). The span at 74 to 94 (IAAPEPIAAPEPIPAPEPIAA) shows a compositional bias: pro residues. Basic and acidic residues predominate over residues 100–118 (LKSEHKPVEREHKPVERKP). The span at 146–158 (VPTSQKSAKSTPG) shows a compositional bias: polar residues. The 232-residue stretch at 192 to 423 (GLDYHVVAVF…DPNYVFKPVY (232 aa)) folds into the GB1/RHD3-type G domain. 202–209 (GSQSTGKS) contacts GTP. Positions 603–630 (SYDDTLAALEQELDTLRDHKSKVEIDRL) form a coiled coil. Residues 840-860 (IPLYMYGLLLLLGWNEIMAVL) form a helical membrane-spanning segment. Topologically, residues 861–863 (RSP) are lumenal. A helical membrane pass occupies residues 864 to 884 (VYFMFLLVAAGAAYVIHTLHL). Residues 885 to 938 (WGPLTHMTNTMIAEATDMAKAKLKQVLNEAPTGETREREAPVGSSRDDVELKDL) are Cytoplasmic-facing. Positions 911-938 (LNEAPTGETREREAPVGSSRDDVELKDL) are disordered. A compositionally biased stretch (basic and acidic residues) spans 918–938 (ETREREAPVGSSRDDVELKDL).

This sequence belongs to the TRAFAC class dynamin-like GTPase superfamily. GB1/RHD3 GTPase family. RHD3 subfamily.

It localises to the endoplasmic reticulum membrane. Cooperates with the reticulon proteins and tubule-shaping DP1 family proteins to generate and maintain the structure of the tubular endoplasmic reticulum network. Has GTPase activity, which is required for its function in ER organization. In Yarrowia lipolytica (strain CLIB 122 / E 150) (Yeast), this protein is Protein SEY1.